The sequence spans 280 residues: UPF0276 protein CC_3255 (280 aa).

It belongs to the UPF0276 family.

This Caulobacter vibrioides (strain ATCC 19089 / CIP 103742 / CB 15) (Caulobacter crescentus) protein is UPF0276 protein CC_3255.